Reading from the N-terminus, the 487-residue chain is N-succinylglutamate 5-semialdehyde dehydrogenase (487 aa).

221 to 226 (GSSDTG) is an NAD(+) binding site. Active-site residues include glutamate 244 and cysteine 278.

It belongs to the aldehyde dehydrogenase family. AstD subfamily.

It carries out the reaction N-succinyl-L-glutamate 5-semialdehyde + NAD(+) + H2O = N-succinyl-L-glutamate + NADH + 2 H(+). It functions in the pathway amino-acid degradation; L-arginine degradation via AST pathway; L-glutamate and succinate from L-arginine: step 4/5. In terms of biological role, catalyzes the NAD-dependent reduction of succinylglutamate semialdehyde into succinylglutamate. The protein is N-succinylglutamate 5-semialdehyde dehydrogenase of Burkholderia orbicola (strain MC0-3).